Reading from the N-terminus, the 1181-residue chain is Sodium/potassium/calcium exchanger 1 (1181 aa).

Residues 1 to 419 (MGKLIRMGTQ…DLFSVEDRRQ (419 aa)) lie on the Extracellular side of the membrane. Disordered stretches follow at residues 107–232 (AMED…TSLK), 255–276 (SLVG…STTP), and 300–323 (STPA…GTST). Residues 124-136 (SLKNNYSPTTAGT) are compositionally biased toward polar residues. Asn-271 carries N-linked (GlcNAc...) asparagine glycosylation. Polar residues predominate over residues 301-311 (TPATTEGSTAA). The helical transmembrane segment at 420–440 (GWVVLHIFGMTYVFVALAIVC) threads the bilayer. At 441 to 464 (DEYFVPALGVITDKLQISEDVAGA) the chain is on the cytoplasmic side. One copy of the Alpha-1 repeat lies at 461–501 (VAGATFMAAGGSAPELFTSLIGVFISHSNVGIGTIVGSAVF). The helical transmembrane segment at 465 to 485 (TFMAAGGSAPELFTSLIGVFI) threads the bilayer. The Extracellular segment spans residues 486 to 491 (SHSNVG). A helical transmembrane segment spans residues 492-512 (IGTIVGSAVFNILFVIGTCAL). The Cytoplasmic segment spans residues 513–519 (FSREILN). A helical membrane pass occupies residues 520 to 544 (LTWWPLFRDVSFYILDLSMLIVFFL). Topologically, residues 545-552 (DSLIAWWE) are extracellular. A helical membrane pass occupies residues 553–569 (SLLLLLAYALYVFTMKW). Over 570–989 (NKQIERWVKE…SLEWPESRQK (420 aa)) the chain is Cytoplasmic. Residues 598-617 (PSDGAIEENEQQDNKKLKLP) form a disordered region. Ser-625 bears the Phosphoserine mark. A disordered region spans residues 650 to 983 (GEARPSKDKQ…ESEEPLSLEW (334 aa)). Thr-690 is subject to Phosphothreonine. Positions 701-715 (GDQEEDPGCQEDVDE) are enriched in acidic residues. A run of 14 repeats spans residues 730–741 (ETEAEGKKDEEG), 742–754 (ETEA…GQEE), 755–766 (ETETKGKEKQEG), 767–778 (ETESEGKDEQEG), 779–791 (ETEA…DHEG), 792–804 (ETEA…EHEG), 805–817 (ETEA…EQEG), 818–830 (ETEA…EQEG), 831–843 (ETEA…EHEV), 844–856 (ETEA…NHEG), 857–869 (ETEA…DHEG), 870–881 (ETEAEGNVEHQG), 882–893 (ETEAEGKVEHEG), and 894–905 (ETEAGEKDEHEG). Basic and acidic residues-rich tracts occupy residues 730–750 (ETEA…RKED), 757–775 (ETKG…GKDE), and 782–805 (AEGK…HEGE). The tract at residues 730–905 (ETEAEGKKDE…EAGEKDEHEG (176 aa)) is 14 X approximate tandem repeats. The span at 806–820 (TEAEGTEDEQEGETE) shows a compositional bias: acidic residues. Over residues 834 to 906 (AEGKEVEHEV…AGEKDEHEGQ (73 aa)) the composition is skewed to basic and acidic residues. Acidic residues-rich tracts occupy residues 921–931 (GEAEANAEDQC) and 949–979 (GDSE…EEPL). A helical membrane pass occupies residues 990–1010 (QAIYLFLLPIVFPLWLTIPDV). The Extracellular segment spans residues 1011–1017 (RRQEARK). A helical transmembrane segment spans residues 1018 to 1038 (FFVITFLGSIIWIAMFSYLMV). The Cytoplasmic segment spans residues 1039–1053 (WWAHQVGETIGISEE). The helical transmembrane segment at 1054–1074 (IMGLTILAAGTSIPDLITSVI) threads the bilayer. The stretch at 1061 to 1092 (AAGTSIPDLITSVIVARKGLGDMAVSSSVGSN) is one Alpha-2 repeat. The Extracellular portion of the chain corresponds to 1075–1092 (VARKGLGDMAVSSSVGSN). A helical membrane pass occupies residues 1093–1113 (IFDITVGLPVPWLLFSLINAL). Topologically, residues 1114 to 1121 (QPIPVSSN) are cytoplasmic. The chain crosses the membrane as a helical span at residues 1122 to 1142 (GLFCAIVLLFLMLLFVIFSIA). The Extracellular segment spans residues 1143-1150 (SCKWRMNK). A helical membrane pass occupies residues 1151–1171 (ILGFTMFLLYFVFLVISVMLE). Residues 1172–1181 (DRIISCPVSV) lie on the Cytoplasmic side of the membrane.

This sequence belongs to the Ca(2+):cation antiporter (CaCA) (TC 2.A.19) family. SLC24A subfamily. The uncleaved signal sequence is required for efficient membrane targeting and proper membrane integration and topology. Highly expressed in the eye.

The protein resides in the cell membrane. The enzyme catalyses Ca(2+)(out) + K(+)(out) + 4 Na(+)(in) = Ca(2+)(in) + K(+)(in) + 4 Na(+)(out). Its function is as follows. Calcium, potassium:sodium antiporter that transports 1 Ca(2+) and 1 K(+) in exchange for 4 Na(+). Critical component of the visual transduction cascade, controlling the calcium concentration of outer segments during light and darkness. Light causes a rapid lowering of cytosolic free calcium in the outer segment of both retinal rod and cone photoreceptors and the light-induced lowering of calcium is caused by extrusion via this protein which plays a key role in the process of light adaptation. The chain is Sodium/potassium/calcium exchanger 1 (Slc24a1) from Rattus norvegicus (Rat).